The following is a 125-amino-acid chain: Large ribosomal subunit protein bL12 (125 aa).

The protein belongs to the bacterial ribosomal protein bL12 family. In terms of assembly, homodimer. Part of the ribosomal stalk of the 50S ribosomal subunit. Forms a multimeric L10(L12)X complex, where L10 forms an elongated spine to which 2 to 4 L12 dimers bind in a sequential fashion. Binds GTP-bound translation factors.

Functionally, forms part of the ribosomal stalk which helps the ribosome interact with GTP-bound translation factors. Is thus essential for accurate translation. The chain is Large ribosomal subunit protein bL12 from Chlorobium limicola (strain DSM 245 / NBRC 103803 / 6330).